We begin with the raw amino-acid sequence, 147 residues long: Hemoglobin subunit beta (147 aa).

Val-2 bears the N-acetylvaline mark. Residues 3 to 147 (HLTPEEKSAV…VANALAHKYH (145 aa)) form the Globin domain. Residue Thr-13 is modified to Phosphothreonine. Ser-45 carries the post-translational modification Phosphoserine. Lys-60 is modified (N6-acetyllysine). His-64 is a binding site for heme b. The residue at position 83 (Lys-83) is an N6-acetyllysine. Residue His-93 participates in heme b binding. Cys-94 carries the post-translational modification S-nitrosocysteine. N6-acetyllysine is present on Lys-145.

It belongs to the globin family. As to quaternary structure, heterotetramer of two alpha chains and two beta chains. As to expression, red blood cells.

Functionally, involved in oxygen transport from the lung to the various peripheral tissues. The polypeptide is Hemoglobin subunit beta (HBB) (Gorilla gorilla gorilla (Western lowland gorilla)).